The following is a 267-amino-acid chain: Undecaprenyl-diphosphatase (267 aa).

Transmembrane regions (helical) follow at residues 4–24, 41–61, 84–104, 116–136, 160–180, 185–205, 216–236, and 246–266; these read ILII…PISS, NIQN…ILLF, ILIL…GFMF, YISY…FISL, CFSL…GLIL, YVLF…VLIL, ENIF…LIFG, and TSLI…LFTC.

Belongs to the UppP family.

The protein localises to the cell membrane. The catalysed reaction is di-trans,octa-cis-undecaprenyl diphosphate + H2O = di-trans,octa-cis-undecaprenyl phosphate + phosphate + H(+). Catalyzes the dephosphorylation of undecaprenyl diphosphate (UPP). Confers resistance to bacitracin. In Wigglesworthia glossinidia brevipalpis, this protein is Undecaprenyl-diphosphatase.